Consider the following 424-residue polypeptide: Probable aminotransferase TAT4 (424 aa).

The protein belongs to the class-I pyridoxal-phosphate-dependent aminotransferase family. It depends on pyridoxal 5'-phosphate as a cofactor.

The protein is Probable aminotransferase TAT4 of Arabidopsis thaliana (Mouse-ear cress).